Here is a 250-residue protein sequence, read N- to C-terminus: MSRKPIIAGNWKMNKNPQEAQAFVEAIAGKLPAGDKIEAAIAAPAVDLNALLWFAKDSELKVAAQNCYFEDAGAFTGETSPKVLAEMGVNYVVIGHSERRDYFHETDEDINKKAHAIFRNGLTPIICCGESLETYEAGKAVEFVGAQVSAALKDLTADQVASLVIAYEPIWAIGTGKSATKDDAQNMCKAVRDVVAADFGQEVADKVRVQYGGSVNPSNVAEYMACPDVDGALVGGASLEAESFLALLNF.

10–12 (NWK) contacts substrate. Histidine 96 (electrophile) is an active-site residue. The active-site Proton acceptor is the glutamate 168. Substrate is bound by residues glycine 174, serine 214, and 235-236 (GG).

The protein belongs to the triosephosphate isomerase family. In terms of assembly, homodimer.

It is found in the cytoplasm. The catalysed reaction is D-glyceraldehyde 3-phosphate = dihydroxyacetone phosphate. The protein operates within carbohydrate biosynthesis; gluconeogenesis. It participates in carbohydrate degradation; glycolysis; D-glyceraldehyde 3-phosphate from glycerone phosphate: step 1/1. Its function is as follows. Involved in the gluconeogenesis. Catalyzes stereospecifically the conversion of dihydroxyacetone phosphate (DHAP) to D-glyceraldehyde-3-phosphate (G3P). The polypeptide is Triosephosphate isomerase (Streptococcus suis (strain 98HAH33)).